Reading from the N-terminus, the 419-residue chain is Histidine--tRNA ligase (419 aa).

Belongs to the class-II aminoacyl-tRNA synthetase family. In terms of assembly, homodimer.

It is found in the cytoplasm. The catalysed reaction is tRNA(His) + L-histidine + ATP = L-histidyl-tRNA(His) + AMP + diphosphate + H(+). This Caldicellulosiruptor saccharolyticus (strain ATCC 43494 / DSM 8903 / Tp8T 6331) protein is Histidine--tRNA ligase.